A 122-amino-acid chain; its full sequence is Putative protein adenylyltransferase MJ1547 (122 aa).

Residues 11 to 25 (GSYAKNEYTKRSDID) carry the GSX(10)DXD motif motif. 3 residues coordinate Mg(2+): Asp23, Asp25, and Asp48.

This sequence belongs to the MntA antitoxin family. Probably forms a complex with cognate toxin MJ1548. Mg(2+) serves as cofactor.

The enzyme catalyses L-tyrosyl-[protein] + ATP = O-(5'-adenylyl)-L-tyrosyl-[protein] + diphosphate. It carries out the reaction O-(5'-adenylyl)-L-tyrosyl-[protein] + ATP = O-[5'-(adenylyl-(5'-&gt;3')-adenylyl)]-L-tyrosyl-[protein] + diphosphate. Its function is as follows. Probable antitoxin component of a putative type VII toxin-antitoxin (TA) system. Neutralizes cognate toxic MJ1548 by di-AMPylation. The protein is Putative protein adenylyltransferase MJ1547 of Methanocaldococcus jannaschii (strain ATCC 43067 / DSM 2661 / JAL-1 / JCM 10045 / NBRC 100440) (Methanococcus jannaschii).